The chain runs to 225 residues: Isoprenyl transferase 1 (225 aa).

Aspartate 3 is an active-site residue. A Mg(2+)-binding site is contributed by aspartate 3. Substrate is bound by residues 4–7 (GNRR), tryptophan 8, histidine 21, and 49–51 (SME). Asparagine 52 acts as the Proton acceptor in catalysis. Substrate-binding positions include arginine 55, arginine 174, and 180 to 182 (RLS). Glutamate 193 is a Mg(2+) binding site.

Belongs to the UPP synthase family. In terms of assembly, homodimer. Mg(2+) is required as a cofactor.

In terms of biological role, catalyzes the condensation of isopentenyl diphosphate (IPP) with allylic pyrophosphates generating different type of terpenoids. The chain is Isoprenyl transferase 1 from Corynebacterium glutamicum (strain ATCC 13032 / DSM 20300 / JCM 1318 / BCRC 11384 / CCUG 27702 / LMG 3730 / NBRC 12168 / NCIMB 10025 / NRRL B-2784 / 534).